Here is a 98-residue protein sequence, read N- to C-terminus: Serine protease inhibitor Kazal-type 14 (98 aa).

An N-terminal signal peptide occupies residues 1-23 (MVKYFQVLWSLLFSIMLHSMLLA). The Kazal-like domain occupies 35-98 (GLIKIKCPYK…QIRYYHTGRC (64 aa)). Disulfide bonds link Cys41–Cys80, Cys58–Cys77, and Cys66–Cys98. N-linked (GlcNAc...) asparagine glycosylation is present at Asn52.

The protein localises to the secreted. May be a serine protease inhibitor. The sequence is that of Serine protease inhibitor Kazal-type 14 (Spink14) from Rattus norvegicus (Rat).